Consider the following 343-residue polypeptide: Anthranilate phosphoribosyltransferase (343 aa).

Residues Gly77, 80-81 (GD), Thr85, 87-90 (NVST), 105-113 (KHGNRSSSG), and Ser117 each bind 5-phospho-alpha-D-ribose 1-diphosphate. Gly77 contributes to the anthranilate binding site. Position 89 (Ser89) interacts with Mg(2+). An anthranilate-binding site is contributed by Asn108. Arg163 contacts anthranilate. The Mg(2+) site is built by Asp222 and Glu223.

The protein belongs to the anthranilate phosphoribosyltransferase family. Homodimer. Mg(2+) serves as cofactor.

It catalyses the reaction N-(5-phospho-beta-D-ribosyl)anthranilate + diphosphate = 5-phospho-alpha-D-ribose 1-diphosphate + anthranilate. It participates in amino-acid biosynthesis; L-tryptophan biosynthesis; L-tryptophan from chorismate: step 2/5. In terms of biological role, catalyzes the transfer of the phosphoribosyl group of 5-phosphorylribose-1-pyrophosphate (PRPP) to anthranilate to yield N-(5'-phosphoribosyl)-anthranilate (PRA). The sequence is that of Anthranilate phosphoribosyltransferase from Cenarchaeum symbiosum (strain A).